Consider the following 199-residue polypeptide: Putative DNA-directed RNA polymerase subunit L376 (199 aa).

This sequence belongs to the eukaryotic RPB7/RPC8 RNA polymerase subunit family.

Its subcellular location is the virion. It carries out the reaction RNA(n) + a ribonucleoside 5'-triphosphate = RNA(n+1) + diphosphate. The chain is Putative DNA-directed RNA polymerase subunit L376 from Acanthamoeba polyphaga (Amoeba).